The chain runs to 1052 residues: Malignant fibrous histiocytoma-amplified sequence 1 (1052 aa).

Ala-2 bears the N-acetylalanine mark. LRR repeat units follow at residues 64–85, 88–109, 112–133, 136–157, 159–180, 182–203, 205–226, 228–249, 251–272, 274–296, 297–318, 320–341, and 343–364; these read DIEALNLGNNGLEEVPEGLGSA, SLRVLVLRRNRFARLPPAVAEL, HLTELDVSHNRLTALGAEVVSA, ELRKLNLSHNQLPALPAQLGAL, HLEELDVSFNRLAHLPDSLSCL, RLRTLDVDHNQLTAFPRQLLQL, ALEELDVSSNRLRGLPEDISAL, ALKILWLSGAELGTLPAGFCEL, SLESLMLDNNGLQALPAQFSCL, RLKMLNLSSNLFEEFPAALLPLA, GLEELYLSRNQLTSVPSLISGL, RLLTLWLDNNRIRYLPDSIVEL, and GLEELVLQGNQIAVLPDHFGQL. The tract at residues 64 to 364 is required for interaction with PJA2; the sequence is DIEALNLGNN…AVLPDHFGQL (301 aa). Positions 64-649 are required for interaction with PPP2R2A; the sequence is DIEALNLGNN…DKLLSVAEHR (586 aa). Residues 403 to 649 enclose the Roc domain; that stretch reads QPAVQPRLKL…DKLLSVAEHR (247 aa). Lys-601 bears the N6-acetyllysine mark.

Interacts with RAF1. Interacts with HSPD1. Interacts with PPP2CA; retains PPP2CA into the cytoplasm and excludes it from the nucleus. Interacts with PPP2R2A; the interaction is direct. Interacts with PJA2. In terms of processing, ubiquitinated. Ubiquitination by PJA2 does not lead MFHAS1 to proteasomal degradation but positively regulates its function in polarization of macrophages. Ubiquitously expressed. Overexpressed in malignant fibrous histiocytomas. Expressed in red blood cells (at protein level).

Its subcellular location is the cytoplasm. Its function is as follows. Probable GTP-binding protein. Functions in innate immunity and more specifically the inflammatory response as a regulator of the Toll-like receptor TLR2 and TLR4 signaling pathways. Negatively regulates the part of the TLR4 signaling pathway that leads to the activation of the transcription factor AP-1. By retaining the phosphatase complex PP2A into the cytoplasm, prevents the dephosphorylation of the AP-1 subunit JUN which is required for proper activation of the transcription factor. Both inhibits and activates the TLR2-dependent signaling pathway. Positively regulates the TLR2 signaling pathway to activate specifically the downstream p38 and JNK MAP kinases and promote the polarization of macrophages toward the pro-inflammatory M1 phenotype. It may also play a role in the regulation of inflammation induced by high glucose through the PKB/AKT signaling pathway. Also involved in erythrocyte differentiation through activation of the ERK1/ERK2 signaling pathway. The protein is Malignant fibrous histiocytoma-amplified sequence 1 of Homo sapiens (Human).